A 90-amino-acid polypeptide reads, in one-letter code: Small ribosomal subunit protein uS15 (90 aa).

It belongs to the universal ribosomal protein uS15 family. In terms of assembly, part of the 30S ribosomal subunit. Forms a bridge to the 50S subunit in the 70S ribosome, contacting the 23S rRNA.

Functionally, one of the primary rRNA binding proteins, it binds directly to 16S rRNA where it helps nucleate assembly of the platform of the 30S subunit by binding and bridging several RNA helices of the 16S rRNA. In terms of biological role, forms an intersubunit bridge (bridge B4) with the 23S rRNA of the 50S subunit in the ribosome. The sequence is that of Small ribosomal subunit protein uS15 from Blochmanniella floridana.